Reading from the N-terminus, the 561-residue chain is Potassium-transporting ATPase potassium-binding subunit (561 aa).

12 helical membrane-spanning segments follow: residues 5-25 (LAAG…YVPV), 60-80 (YGYA…LYAL), 86-106 (VLPL…NTAV), 131-151 (GLAV…VALI), 177-197 (ILLP…VIQS), 247-267 (PTPV…VSLT), 281-301 (LTLL…TLAA), 324-344 (FGIP…TGAV), 376-396 (GLYG…LLVG), 415-435 (ALSV…TVIL), 488-508 (ALGL…LALA), and 537-557 (GTVV…GPIA).

Belongs to the KdpA family. In terms of assembly, the system is composed of three essential subunits: KdpA, KdpB and KdpC.

The protein resides in the cell membrane. Its function is as follows. Part of the high-affinity ATP-driven potassium transport (or Kdp) system, which catalyzes the hydrolysis of ATP coupled with the electrogenic transport of potassium into the cytoplasm. This subunit binds the extracellular potassium ions and delivers the ions to the membrane domain of KdpB through an intramembrane tunnel. The protein is Potassium-transporting ATPase potassium-binding subunit of Rhodococcus opacus (strain B4).